The chain runs to 457 residues: Solute carrier family 38 member 6 (457 aa).

Residue Met1 is modified to N-acetylmethionine. Phosphoserine occurs at positions 4 and 7. 5 helical membrane passes run 48-68, 70-90, 112-132, 171-191, and 192-212; these read FGLS…LGLA, VMAN…ALLA, LGLF…IIIQ, LLII…KIGF, and LGYT…VVVI. An intrachain disulfide couples Cys219 to Cys239. N-linked (GlcNAc...) asparagine glycosylation is present at Asn234. The helical transmembrane segment at 251–271 threads the bilayer; it reads VYAIPTMAFSFLCHTSVLPIY. Asn284 is a glycosylation site (N-linked (GlcNAc...) asparagine). 5 consecutive transmembrane segments (helical) span residues 289–309, 328–348, 372–392, 395–415, and 432–452; these read AIAL…LTFY, AAVM…VPLI, SLTT…VPDI, VFGV…PGLF, and ALSL…LIIL.

Belongs to the amino acid/polyamine transporter 2 family.

The protein localises to the cell membrane. Its subcellular location is the synapse. It carries out the reaction L-glutamine(out) = L-glutamine(in). The enzyme catalyses L-glutamate(out) = L-glutamate(in). Amino acid transporter with an apparent selectivity for L-glutamine and L-glutamate. May facilitate glutamine uptake in excitatory neurons. The transport mechanism remains to be elucidated. The chain is Solute carrier family 38 member 6 from Rattus norvegicus (Rat).